The primary structure comprises 292 residues: Phosphatidylserine decarboxylase proenzyme (292 aa).

Catalysis depends on charge relay system; for autoendoproteolytic cleavage activity residues Asp-89, His-146, and Ser-252. Ser-252 acts as the Schiff-base intermediate with substrate; via pyruvic acid; for decarboxylase activity in catalysis. The residue at position 252 (Ser-252) is a Pyruvic acid (Ser); by autocatalysis.

The protein belongs to the phosphatidylserine decarboxylase family. PSD-B subfamily. Prokaryotic type I sub-subfamily. Heterodimer of a large membrane-associated beta subunit and a small pyruvoyl-containing alpha subunit. It depends on pyruvate as a cofactor. Post-translationally, is synthesized initially as an inactive proenzyme. Formation of the active enzyme involves a self-maturation process in which the active site pyruvoyl group is generated from an internal serine residue via an autocatalytic post-translational modification. Two non-identical subunits are generated from the proenzyme in this reaction, and the pyruvate is formed at the N-terminus of the alpha chain, which is derived from the carboxyl end of the proenzyme. The autoendoproteolytic cleavage occurs by a canonical serine protease mechanism, in which the side chain hydroxyl group of the serine supplies its oxygen atom to form the C-terminus of the beta chain, while the remainder of the serine residue undergoes an oxidative deamination to produce ammonia and the pyruvoyl prosthetic group on the alpha chain. During this reaction, the Ser that is part of the protease active site of the proenzyme becomes the pyruvoyl prosthetic group, which constitutes an essential element of the active site of the mature decarboxylase.

Its subcellular location is the cell membrane. It catalyses the reaction a 1,2-diacyl-sn-glycero-3-phospho-L-serine + H(+) = a 1,2-diacyl-sn-glycero-3-phosphoethanolamine + CO2. Its pathway is phospholipid metabolism; phosphatidylethanolamine biosynthesis; phosphatidylethanolamine from CDP-diacylglycerol: step 2/2. In terms of biological role, catalyzes the formation of phosphatidylethanolamine (PtdEtn) from phosphatidylserine (PtdSer). The chain is Phosphatidylserine decarboxylase proenzyme from Shewanella sp. (strain MR-7).